Consider the following 168-residue polypeptide: G/U mismatch-specific DNA glycosylase (168 aa).

This sequence belongs to the uracil-DNA glycosylase (UDG) superfamily. TDG/mug family. As to quaternary structure, binds DNA as a monomer.

Its subcellular location is the cytoplasm. It carries out the reaction Specifically hydrolyzes mismatched double-stranded DNA and polynucleotides, releasing free uracil.. Excises ethenocytosine and uracil, which can arise by alkylation or deamination of cytosine, respectively, from the corresponding mispairs with guanine in ds-DNA. It is capable of hydrolyzing the carbon-nitrogen bond between the sugar-phosphate backbone of the DNA and the mispaired base. The complementary strand guanine functions in substrate recognition. Required for DNA damage lesion repair in stationary-phase cells. This is G/U mismatch-specific DNA glycosylase from Salmonella paratyphi B (strain ATCC BAA-1250 / SPB7).